A 200-amino-acid polypeptide reads, in one-letter code: Imidazole glycerol phosphate synthase subunit HisH (200 aa).

Residues 2–200 form the Glutamine amidotransferase type-1 domain; sequence KVAIVEYGVG…LGEVLTGASR (199 aa). Cys79 acts as the Nucleophile in catalysis. Residues His179 and Glu181 contribute to the active site.

In terms of assembly, heterodimer of HisH and HisF.

It localises to the cytoplasm. The enzyme catalyses 5-[(5-phospho-1-deoxy-D-ribulos-1-ylimino)methylamino]-1-(5-phospho-beta-D-ribosyl)imidazole-4-carboxamide + L-glutamine = D-erythro-1-(imidazol-4-yl)glycerol 3-phosphate + 5-amino-1-(5-phospho-beta-D-ribosyl)imidazole-4-carboxamide + L-glutamate + H(+). It catalyses the reaction L-glutamine + H2O = L-glutamate + NH4(+). It functions in the pathway amino-acid biosynthesis; L-histidine biosynthesis; L-histidine from 5-phospho-alpha-D-ribose 1-diphosphate: step 5/9. In terms of biological role, IGPS catalyzes the conversion of PRFAR and glutamine to IGP, AICAR and glutamate. The HisH subunit catalyzes the hydrolysis of glutamine to glutamate and ammonia as part of the synthesis of IGP and AICAR. The resulting ammonia molecule is channeled to the active site of HisF. The chain is Imidazole glycerol phosphate synthase subunit HisH from Methanopyrus kandleri (strain AV19 / DSM 6324 / JCM 9639 / NBRC 100938).